A 192-amino-acid chain; its full sequence is Der GTPase-activating protein YihI (192 aa).

The disordered stretch occupies residues 1–80 (MSRTKKTRRI…KAAVKEVKDP (80 aa)). Composition is skewed to basic and acidic residues over residues 9–25 (RITDIMPARKADKKPEQ), 37–48 (TRYELDAKAREE), and 65–80 (DPAEQKKAAVKEVKDP).

This sequence belongs to the YihI family. Interacts with Der.

Its function is as follows. A GTPase-activating protein (GAP) that modifies Der/EngA GTPase function. May play a role in ribosome biogenesis. This is Der GTPase-activating protein YihI from Actinobacillus pleuropneumoniae serotype 5b (strain L20).